Reading from the N-terminus, the 112-residue chain is UPF0212 protein Mpal_1084 (112 aa).

The protein belongs to the UPF0212 family.

The chain is UPF0212 protein Mpal_1084 from Methanosphaerula palustris (strain ATCC BAA-1556 / DSM 19958 / E1-9c).